The following is an 891-amino-acid chain: Valine--tRNA ligase (891 aa).

Positions 43-53 (PFTSGTLHLGH) match the 'HIGH' region motif. The short motif at 536–540 (KMSKS) is the 'KMSKS' region element. K539 contacts ATP.

Belongs to the class-I aminoacyl-tRNA synthetase family. ValS type 2 subfamily.

It is found in the cytoplasm. The enzyme catalyses tRNA(Val) + L-valine + ATP = L-valyl-tRNA(Val) + AMP + diphosphate. Catalyzes the attachment of valine to tRNA(Val). As ValRS can inadvertently accommodate and process structurally similar amino acids such as threonine, to avoid such errors, it has a 'posttransfer' editing activity that hydrolyzes mischarged Thr-tRNA(Val) in a tRNA-dependent manner. In Pyrococcus abyssi (strain GE5 / Orsay), this protein is Valine--tRNA ligase.